The following is a 401-amino-acid chain: Aspartate aminotransferase, mitochondrial (401 aa).

A Phosphothreonine modification is found at Thr-19. At Lys-30 the chain carries N6-acetyllysine. Substrate is bound at residue Gly-36. Lys-44 is modified (N6-acetyllysine; alternate). N6-succinyllysine; alternate is present on Lys-44. Residue Lys-53 is modified to N6-acetyllysine. Position 61 is an N6-acetyllysine; alternate (Lys-61). Lys-61 carries the post-translational modification N6-succinyllysine; alternate. The residue at position 67 (Tyr-67) is a 3'-nitrotyrosine; alternate. Tyr-67 is modified (phosphotyrosine; alternate). 3 positions are modified to N6-acetyllysine; alternate: Lys-78, Lys-93, and Lys-130. Lys-78, Lys-93, and Lys-130 each carry N6-succinyllysine; alternate. Residue Trp-133 coordinates substrate. Position 156 is an N6-acetyllysine; alternate (Lys-156). N6-succinyllysine; alternate is present on Lys-156. Asn-186 lines the substrate pocket. Position 198 is an N6-succinyllysine (Lys-198). Position 205 is an N6-acetyllysine (Lys-205). Lys-250 and Lys-267 each carry N6-acetyllysine; alternate. An N6-(pyridoxal phosphate)lysine; alternate modification is found at Lys-250. Residue Lys-267 is modified to N6-succinyllysine; alternate. N6-acetyllysine is present on Lys-273. Lys-280 is subject to N6-acetyllysine; alternate. Lys-280 bears the N6-succinyllysine; alternate mark. Arg-284 carries the asymmetric dimethylarginine modification. An N6-acetyllysine; alternate modification is found at Lys-309. Lys-309 is subject to N6-succinyllysine; alternate. At Lys-316 the chain carries N6-acetyllysine. Lys-334 carries the N6-acetyllysine; alternate modification. Lys-334 bears the N6-succinyllysine; alternate mark. N6-acetyllysine is present on residues Lys-335 and Lys-358. N6-acetyllysine; alternate occurs at positions 367 and 375. N6-succinyllysine; alternate occurs at positions 367 and 375. Arg-378 is a binding site for substrate.

The protein belongs to the class-I pyridoxal-phosphate-dependent aminotransferase family. As to quaternary structure, homodimer. Pyridoxal 5'-phosphate is required as a cofactor.

Its subcellular location is the mitochondrion matrix. It localises to the cell membrane. It catalyses the reaction L-aspartate + 2-oxoglutarate = oxaloacetate + L-glutamate. The enzyme catalyses L-kynurenine + 2-oxoglutarate = kynurenate + L-glutamate + H2O. In terms of biological role, catalyzes the irreversible transamination of the L-tryptophan metabolite L-kynurenine to form kynurenic acid (KA). As a member of the malate-aspartate shuttle, it has a key role in the intracellular NAD(H) redox balance. Is important for metabolite exchange between mitochondria and cytosol, and for amino acid metabolism. Facilitates cellular uptake of long-chain free fatty acids. In Equus caballus (Horse), this protein is Aspartate aminotransferase, mitochondrial (GOT2).